The chain runs to 108 residues: Small ribosomal subunit protein eS25 (108 aa).

The disordered stretch occupies residues 1–36 (MAPKKAQAPPPSSKPAKSGGGKQKKKKWSKGKQKEK). Residues 22–31 (KQKKKKWSKG) show a composition bias toward basic residues.

Belongs to the eukaryotic ribosomal protein eS25 family.

The chain is Small ribosomal subunit protein eS25 (RPS25) from Solanum lycopersicum (Tomato).